Here is an 861-residue protein sequence, read N- to C-terminus: MNKAISDFTAHTPMMQQYWKLKNQHPDQLMFYRMGDFYEIFYEDAKKAAKLLDITLTARGQSAGQSIPMCGIPFHSLEGYLAKLVKLGESVVICEQIGDPATSKGPVERQVVRIITPGTVSDEALLDERRDNLIAALLGDERLFGLAVLDITSGNFSVQEIKGWENLLAELERLNPVELLIPDDWPRDLPAEKRPGARRRAPWDFDRDSARKALCQQFATKDLKGFGCDKLTLAIGAAGCLLTYAKETQRTALPHLRSLRHERLDDTVILDGASRRNLELDINLAGGRDNTLQSVIDRCQTAMASRLLSRWLNRPLRDLKVLQARQDSIRCLLDSYRFEKLQPQLKEIGDIERILARIGLRNARPRDLARLRDALGALPELQNAMTELEAPHLARLAAITGTYPELASLLERAIIDNPPAVIRDGGVLKAGYDNELDDLLAISENAGQFLIDLEAREKARTGLANLKVGYNRVHGYFIELPTKQAEQAPGDYIRRQTLKGAERFITPELKAFEDKALSAKSRALAREKMLYDALLETLISHLAPLQDSAAALAELDVLSNLAERALNLDLNCPRFVDEPCLRIVQGRHPVVEQVLTTPFVANDLGLDNSTRMLIITGPNMGGKSTYMRQTALIVLLAHIGSFVPAASCELSLVDRIFTRIGSSDDLAGGRSTFMVEMSETANILHNATDRSLVLMDEVGRGTSTFDGLSLAWAAAERLAQLRAYTLFATHYFELTVLPESEPLVANVHLNATEHNERIVFLHHVLPGPASQSYGLAVAQLAGVPTVVIQRAREHLGRLETTSLPHEQPPAAKAKDAPQVPHQSDLFASLPHPAIEKLGKLQLDDMTPRQAIEMLYQLKNLL.

ATP is bound at residue 617-624; sequence GPNMGGKS. Positions 799-822 are disordered; it reads ETTSLPHEQPPAAKAKDAPQVPHQ. A compositionally biased stretch (low complexity) spans 808-820; that stretch reads PPAAKAKDAPQVP.

This sequence belongs to the DNA mismatch repair MutS family.

In terms of biological role, this protein is involved in the repair of mismatches in DNA. It is possible that it carries out the mismatch recognition step. This protein has a weak ATPase activity. This is DNA mismatch repair protein MutS from Pseudomonas putida (strain GB-1).